The primary structure comprises 135 residues: MRIIQTTGKRKTAIARAVIREGRGRVRINGKPVEIIEPEIARFTILEPLILAGEEIWNSVDIDVKVQGGGFMGQAEAARIAIARALVEWTGDMNLKEKFIKYDRTMLVGDPRRTEPHKPNRSTKGPRAKRQKSYR.

The span at 108 to 118 (VGDPRRTEPHK) shows a compositional bias: basic and acidic residues. The interval 108-135 (VGDPRRTEPHKPNRSTKGPRAKRQKSYR) is disordered. Over residues 119-135 (PNRSTKGPRAKRQKSYR) the composition is skewed to basic residues.

The protein belongs to the universal ribosomal protein uS9 family.

This is Small ribosomal subunit protein uS9 (rps9) from Pyrococcus horikoshii (strain ATCC 700860 / DSM 12428 / JCM 9974 / NBRC 100139 / OT-3).